The sequence spans 298 residues: Elongation factor Ts (298 aa).

Positions 79–82 are involved in Mg(2+) ion dislocation from EF-Tu; the sequence is TDFV.

Belongs to the EF-Ts family.

It is found in the cytoplasm. Its function is as follows. Associates with the EF-Tu.GDP complex and induces the exchange of GDP to GTP. It remains bound to the aminoacyl-tRNA.EF-Tu.GTP complex up to the GTP hydrolysis stage on the ribosome. This chain is Elongation factor Ts, found in Cereibacter sphaeroides (strain ATCC 17029 / ATH 2.4.9) (Rhodobacter sphaeroides).